We begin with the raw amino-acid sequence, 155 residues long: Ribosomal RNA large subunit methyltransferase H (155 aa).

Residues Leu72, Gly104, and Leu123–Phe128 each bind S-adenosyl-L-methionine.

This sequence belongs to the RNA methyltransferase RlmH family. In terms of assembly, homodimer.

It is found in the cytoplasm. It carries out the reaction pseudouridine(1915) in 23S rRNA + S-adenosyl-L-methionine = N(3)-methylpseudouridine(1915) in 23S rRNA + S-adenosyl-L-homocysteine + H(+). Specifically methylates the pseudouridine at position 1915 (m3Psi1915) in 23S rRNA. This chain is Ribosomal RNA large subunit methyltransferase H, found in Kosmotoga olearia (strain ATCC BAA-1733 / DSM 21960 / TBF 19.5.1).